A 610-amino-acid polypeptide reads, in one-letter code: Granule-bound starch synthase 1, chloroplastic/amyloplastic (610 aa).

The N-terminal 79 residues, 1-79 (MATVTASSNF…SKVKTAGKIV (79 aa)), are a transit peptide targeting the chloroplast. K98 contacts ADP-alpha-D-glucose. A coiled-coil region spans residues 438 to 454 (TGKKKMEAQILELEEKF).

Belongs to the glycosyltransferase 1 family. Bacterial/plant glycogen synthase subfamily. Interacts with PTST. This interaction is critical for the localization to starch granules. Expressed in roots, inflorescences, flowers, fruits and at much higher levels in leaves.

The protein resides in the plastid. It is found in the chloroplast. It carries out the reaction an NDP-alpha-D-glucose + [(1-&gt;4)-alpha-D-glucosyl](n) = [(1-&gt;4)-alpha-D-glucosyl](n+1) + a ribonucleoside 5'-diphosphate + H(+). The protein operates within glycan biosynthesis; starch biosynthesis. Its function is as follows. Required for the synthesis of amylose. Destroyed as it is released from the starch granules during the night. The circadian expression is controlled by CCA1 and LHY transcription factors. The chain is Granule-bound starch synthase 1, chloroplastic/amyloplastic from Arabidopsis thaliana (Mouse-ear cress).